Consider the following 675-residue polypeptide: Cytoplasmic tyrosine-protein kinase BMX (675 aa).

One can recognise a PH domain in the interval 4–111; it reads KSILEELLLK…WLKALQKEIR (108 aa). The segment at 113-149 adopts a Btk-type zinc-finger fold; it reads NPHLLVKYHSGFFVDGKFLCCQQSCKAAPGCTLWEAY. Zn(2+) is bound by residues H121, C132, C133, and C143. A phosphotyrosine; by autocatalysis mark is found at Y216 and Y224. The SH2 domain maps to 296–392; the sequence is WFAGNISRSQ…GMITRLRHPV (97 aa). A Protein kinase domain is found at 417–675; sequence ITLLKELGSG…IEPLREKDKH (259 aa). Residues 423 to 431 and K445 contribute to the ATP site; that span reads LGSGQFGVV. Residue D536 is the Proton acceptor of the active site. At Y566 the chain carries Phosphotyrosine; by SRC and autocatalysis. The CAV1-binding signature appears at 596-603; that stretch reads WAFGILMW.

The protein belongs to the protein kinase superfamily. Tyr protein kinase family. TEC subfamily. As to quaternary structure, interacts with BCAR1, CAV1, MYD88, PTK2/FAK1, RUFY1, RUFY2, STAT3, TIRAP and TNFRSF1B. Zn(2+) is required as a cofactor. In terms of processing, phosphorylated in response to protein I/II and to LPS. Phosphorylation at Tyr-566 by SRC and by autocatalysis leads to activation and is required for STAT3 phosphorylation by BMX. Highly expressed in cells with great migratory potential, including endothelial cells and metastatic carcinoma cell lines.

The protein resides in the cytoplasm. The enzyme catalyses L-tyrosyl-[protein] + ATP = O-phospho-L-tyrosyl-[protein] + ADP + H(+). With respect to regulation, TEK and vascular endothelial growth factor receptor 1 (FLT1) stimulate BMX tyrosine kinase activity. Activated by integrins through the mediation of PTK2/FAK1. Activated by TNF through the mediation of TNFRSF1B. Its function is as follows. Non-receptor tyrosine kinase that plays central but diverse modulatory roles in various signaling processes involved in the regulation of actin reorganization, cell migration, cell proliferation and survival, cell adhesion, and apoptosis. Participates in signal transduction stimulated by growth factor receptors, cytokine receptors, G-protein coupled receptors, antigen receptors and integrins. Induces tyrosine phosphorylation of BCAR1 in response to integrin regulation. Activation of BMX by integrins is mediated by PTK2/FAK1, a key mediator of integrin signaling events leading to the regulation of actin cytoskeleton and cell motility. Plays a critical role in TNF-induced angiogenesis, and implicated in the signaling of TEK and FLT1 receptors, 2 important receptor families essential for angiogenesis. Required for the phosphorylation and activation of STAT3, a transcription factor involved in cell differentiation. Also involved in interleukin-6 (IL6) induced differentiation. Also plays a role in programming adaptive cytoprotection against extracellular stress in different cell systems, salivary epithelial cells, brain endothelial cells, and dermal fibroblasts. May be involved in regulation of endocytosis through its interaction with an endosomal protein RUFY1. May also play a role in the growth and differentiation of hematopoietic cells; as well as in signal transduction in endocardial and arterial endothelial cells. The polypeptide is Cytoplasmic tyrosine-protein kinase BMX (BMX) (Homo sapiens (Human)).